Here is a 142-residue protein sequence, read N- to C-terminus: Large ribosomal subunit protein uL16 (142 aa).

It belongs to the universal ribosomal protein uL16 family. In terms of assembly, part of the 50S ribosomal subunit.

Its function is as follows. Binds 23S rRNA and is also seen to make contacts with the A and possibly P site tRNAs. The protein is Large ribosomal subunit protein uL16 of Thermotoga maritima (strain ATCC 43589 / DSM 3109 / JCM 10099 / NBRC 100826 / MSB8).